An 85-amino-acid chain; its full sequence is Cell division topological specificity factor (85 aa).

The protein belongs to the MinE family.

In terms of biological role, prevents the cell division inhibition by proteins MinC and MinD at internal division sites while permitting inhibition at polar sites. This ensures cell division at the proper site by restricting the formation of a division septum at the midpoint of the long axis of the cell. In Shewanella baltica (strain OS223), this protein is Cell division topological specificity factor.